A 545-amino-acid polypeptide reads, in one-letter code: DNA mismatch repair protein MutL (545 aa).

The interval 516–545 (GRRSGARGGGEARPRPQEESFPEAPLPREP) is disordered.

The protein belongs to the DNA mismatch repair MutL/HexB family.

In terms of biological role, this protein is involved in the repair of mismatches in DNA. It is required for dam-dependent methyl-directed DNA mismatch repair. May act as a 'molecular matchmaker', a protein that promotes the formation of a stable complex between two or more DNA-binding proteins in an ATP-dependent manner without itself being part of a final effector complex. This Thermus thermophilus (strain ATCC BAA-163 / DSM 7039 / HB27) protein is DNA mismatch repair protein MutL.